The primary structure comprises 720 residues: Transcription factor bHLH155 (720 aa).

The span at 522–534 (YPSSSSDQFQTSL) shows a compositional bias: polar residues. The disordered stretch occupies residues 522–558 (YPSSSSDQFQTSLDIPKKNKKRAKPGESSRPRPRDRQ). Residues 540–547 (NKKRAKPG) carry the Nuclear localization signal motif. The 50-residue stretch at 544 to 593 (AKPGESSRPRPRDRQLIQDRIKELRELVPNGSKCSIDSLLERTIKHMLFL) folds into the bHLH domain. The segment covering 545–558 (KPGESSRPRPRDRQ) has biased composition (basic and acidic residues).

The protein belongs to the bHLH protein family. LHW subfamily. In terms of assembly, homodimer.

Its subcellular location is the nucleus. Transcription factor that may regulate root development. This chain is Transcription factor bHLH155 (BHLH155), found in Arabidopsis thaliana (Mouse-ear cress).